A 64-amino-acid chain; its full sequence is Translational regulator CsrA (64 aa).

It belongs to the CsrA/RsmA family. Homodimer; the beta-strands of each monomer intercalate to form a hydrophobic core, while the alpha-helices form wings that extend away from the core.

Its subcellular location is the cytoplasm. Functionally, a key translational regulator that binds mRNA to regulate translation initiation and/or mRNA stability. Mediates global changes in gene expression, shifting from rapid growth to stress survival by linking envelope stress, the stringent response and the catabolite repression systems. Usually binds in the 5'-UTR; binding at or near the Shine-Dalgarno sequence prevents ribosome-binding, repressing translation, binding elsewhere in the 5'-UTR can activate translation and/or stabilize the mRNA. Its function is antagonized by small RNA(s). The chain is Translational regulator CsrA from Actinobacillus pleuropneumoniae serotype 5b (strain L20).